We begin with the raw amino-acid sequence, 400 residues long: MIIKPKIRGFICTTTHPVGCEQNVREQIAFTKSKGAIENGPKKVLVIGASSGYGLSSRIAAAFGSGAATIGVFFEKPGTDKKTGTAGWYNSAAFDKVAKEEGLYAKSINGDAFSNEARATVIDLIKQDLGQIDMVVYSLASPVRKMPETGEVVRSVLKPIGQPYRSTAIDTNKDVIIEAEIEPATEEEVAATTTVMGGQDWELWMSALQEAGVLAEGTRTVAYSYIGSDITWPIYWHGALGKAKEDLDRASAAIDSQLAKIGGGANVAVLKSVVTQASSAIPVMPLYLAMVFKVMREKGIHEGCMDQIYRMFAERLYNNHNPAELTDDKNRLRLDDWELREDVQQACRELWPKVNDANLFAETDYQLYKDEFLKLFGFGVDGVDYDAEANPEADFEVITL.

NAD(+) contacts are provided by residues 48-53, 74-75, 111-112, and 139-140; these read GASSGY, FE, DA, and LA. Tyrosine 225 provides a ligand contact to substrate. Catalysis depends on tyrosine 235, which acts as the Proton donor. NAD(+)-binding positions include lysine 244 and 273 to 275; that span reads VVT.

The protein belongs to the TER reductase family. In terms of assembly, monomer.

It carries out the reaction a 2,3-saturated acyl-[ACP] + NAD(+) = a (2E)-enoyl-[ACP] + NADH + H(+). Its pathway is lipid metabolism; fatty acid biosynthesis. Involved in the final reduction of the elongation cycle of fatty acid synthesis (FAS II). Catalyzes the reduction of a carbon-carbon double bond in an enoyl moiety that is covalently linked to an acyl carrier protein (ACP). The polypeptide is Enoyl-[acyl-carrier-protein] reductase [NADH] (Marinomonas sp. (strain MWYL1)).